Consider the following 201-residue polypeptide: Ribosomal RNA large subunit methyltransferase E (201 aa).

The S-adenosyl-L-methionine site is built by Gly-40, Trp-42, Asp-62, Asp-78, and Asp-101. Lys-141 functions as the Proton acceptor in the catalytic mechanism.

Belongs to the class I-like SAM-binding methyltransferase superfamily. RNA methyltransferase RlmE family.

It is found in the cytoplasm. The catalysed reaction is uridine(2552) in 23S rRNA + S-adenosyl-L-methionine = 2'-O-methyluridine(2552) in 23S rRNA + S-adenosyl-L-homocysteine + H(+). Specifically methylates the uridine in position 2552 of 23S rRNA at the 2'-O position of the ribose in the fully assembled 50S ribosomal subunit. The polypeptide is Ribosomal RNA large subunit methyltransferase E (Anaplasma marginale (strain Florida)).